Consider the following 147-residue polypeptide: uncharacterized protein (147 aa).

Residues 1 to 147 (MEIRRADKDD…RPESGGSGSE (147 aa)) enclose the N-acetyltransferase domain.

This sequence belongs to the acetyltransferase family.

This is an uncharacterized protein from Archaeoglobus fulgidus (strain ATCC 49558 / DSM 4304 / JCM 9628 / NBRC 100126 / VC-16).